The following is a 512-amino-acid chain: 2,3-bisphosphoglycerate-independent phosphoglycerate mutase (512 aa).

D11 and S61 together coordinate Mn(2+). The active-site Phosphoserine intermediate is the S61. Substrate-binding positions include H122, 152 to 153 (RD), R184, R190, 259 to 262 (RADR), and K332. Residues D399, H403, D440, H441, and H459 each coordinate Mn(2+).

Belongs to the BPG-independent phosphoglycerate mutase family. In terms of assembly, monomer. Requires Mn(2+) as cofactor.

It catalyses the reaction (2R)-2-phosphoglycerate = (2R)-3-phosphoglycerate. The protein operates within carbohydrate degradation; glycolysis; pyruvate from D-glyceraldehyde 3-phosphate: step 3/5. Its function is as follows. Catalyzes the interconversion of 2-phosphoglycerate and 3-phosphoglycerate. This is 2,3-bisphosphoglycerate-independent phosphoglycerate mutase from Francisella philomiragia subsp. philomiragia (strain ATCC 25017 / CCUG 19701 / FSC 153 / O#319-036).